A 309-amino-acid chain; its full sequence is Dioxygenase af480 (309 aa).

3 residues coordinate Fe cation: histidine 153, aspartate 155, and histidine 228.

Belongs to the PhyH family. Requires Fe cation as cofactor.

It catalyses the reaction 5-dehydro-6-demethoxyfumagillol + 2-oxoglutarate + O2 = 5-dehydro-6-demethoxy-6-hydroxyfumagillol + succinate + CO2. Its pathway is secondary metabolite biosynthesis; terpenoid biosynthesis. In terms of biological role, dioxygenase; part of the gene cluster that mediates the biosynthesis of fumagillin, a meroterpenoid that has numerous biological activities including irreversible inhibition of human type 2 methionine aminopeptidase (METAP2). Within the pathway, the dioxygenase af480 acts as a 5-dehydro-6-demethoxyfumagillol dioxygenase that hydroylates 5-keto-demethoxyfumagillol at position C-6. The pathway begins with the conversion of farnesyl pyrophosphate (FPP) to beta-trans-bergamotene by the membrane-bound beta-trans-bergamotene synthase af520. The multifunctional cytochrome P450 monooxygenase af510 then converts beta-trans-bergamotene into 5-keto-demethoxyfumagillol via several oxydation steps. 5-keto-demethoxyfumagillol is then subjected to successive C-6 hydroxylation and O-methylation by the dioxygenase af480 and O-methyltransferase af390-400, respectively, to yield 5-keto-fumagillol, which is then stereoselectively reduced by the keto-reductase af490 to 5R-hydroxy-seco-sesquiterpene. The next step is the polyketide transferase af380-catalyzed transfer of a dodecapentaenoyl group synthesized by the polyketide synthase af370 onto 5R-hydroxy-seco-sesquiterpene which leads to the production of prefumagillin. Finally, oxidative cleavage by the monooxygenase af470 converts prefumagillin to fumagillin. The sequence is that of Dioxygenase af480 from Aspergillus fumigatus (strain ATCC MYA-4609 / CBS 101355 / FGSC A1100 / Af293) (Neosartorya fumigata).